Here is a 174-residue protein sequence, read N- to C-terminus: ATP-dependent protease subunit HslV (174 aa).

Threonine 2 is a catalytic residue. Residues glycine 157, cysteine 160, and threonine 163 each coordinate Na(+).

Belongs to the peptidase T1B family. HslV subfamily. A double ring-shaped homohexamer of HslV is capped on each side by a ring-shaped HslU homohexamer. The assembly of the HslU/HslV complex is dependent on binding of ATP.

The protein resides in the cytoplasm. It catalyses the reaction ATP-dependent cleavage of peptide bonds with broad specificity.. Its activity is regulated as follows. Allosterically activated by HslU binding. In terms of biological role, protease subunit of a proteasome-like degradation complex believed to be a general protein degrading machinery. The sequence is that of ATP-dependent protease subunit HslV from Shewanella woodyi (strain ATCC 51908 / MS32).